Reading from the N-terminus, the 72-residue chain is Translation initiation factor IF-1 (72 aa).

The S1-like domain occupies 1–72 (MAKDDVIQMQ…SRARIVFRAK (72 aa)).

This sequence belongs to the IF-1 family. As to quaternary structure, component of the 30S ribosomal translation pre-initiation complex which assembles on the 30S ribosome in the order IF-2 and IF-3, IF-1 and N-formylmethionyl-tRNA(fMet); mRNA recruitment can occur at any time during PIC assembly.

Its subcellular location is the cytoplasm. One of the essential components for the initiation of protein synthesis. Stabilizes the binding of IF-2 and IF-3 on the 30S subunit to which N-formylmethionyl-tRNA(fMet) subsequently binds. Helps modulate mRNA selection, yielding the 30S pre-initiation complex (PIC). Upon addition of the 50S ribosomal subunit IF-1, IF-2 and IF-3 are released leaving the mature 70S translation initiation complex. This is Translation initiation factor IF-1 from Burkholderia mallei (strain NCTC 10247).